Here is a 309-residue protein sequence, read N- to C-terminus: Large ribosomal subunit protein uL22m (309 aa).

The N-terminal 25 residues, 1–25 (MNFHTARISQVGVISRALLSSVSRR), are a transit peptide targeting the mitochondrion. A disordered region spans residues 40–63 (SLFGSITENKPKEGKNRGDEDAGS). Residues 48–59 (NKPKEGKNRGDE) show a composition bias toward basic and acidic residues.

The protein belongs to the universal ribosomal protein uL22 family. In terms of assembly, component of the mitochondrial large ribosomal subunit (mt-LSU). Mature yeast 74S mitochondrial ribosomes consist of a small (37S) and a large (54S) subunit. The 37S small subunit contains a 15S ribosomal RNA (15S mt-rRNA) and 34 different proteins. The 54S large subunit contains a 21S rRNA (21S mt-rRNA) and 46 different proteins. uL22m forms the wall of the exit tunnel.

Its subcellular location is the mitochondrion. Functionally, component of the mitochondrial ribosome (mitoribosome), a dedicated translation machinery responsible for the synthesis of mitochondrial genome-encoded proteins, including at least some of the essential transmembrane subunits of the mitochondrial respiratory chain. The mitoribosomes are attached to the mitochondrial inner membrane and translation products are cotranslationally integrated into the membrane. This is Large ribosomal subunit protein uL22m (MRPL22) from Saccharomyces cerevisiae (strain ATCC 204508 / S288c) (Baker's yeast).